Here is a 357-residue protein sequence, read N- to C-terminus: Arginine kinase (357 aa).

One can recognise a Phosphagen kinase N-terminal domain in the interval 9–91 (KLEAGFKKLQ…FDPIIDDYHG (83 aa)). Residue 64-68 (GVGIY) participates in substrate binding. One can recognise a Phosphagen kinase C-terminal domain in the interval 119–356 (FIISTRVRCG…LEMIKMEKAA (238 aa)). ATP-binding positions include 122-126 (STRVR) and histidine 185. Glutamate 225 contacts substrate. Arginine 229 serves as a coordination point for ATP. Residue cysteine 271 coordinates substrate. ATP contacts are provided by residues 280 to 284 (RASVH) and 309 to 314 (RGTRGE). Glutamate 314 provides a ligand contact to substrate.

It belongs to the ATP:guanido phosphotransferase family. In terms of assembly, monomer.

The protein localises to the cytoplasm. The catalysed reaction is L-arginine + ATP = N(omega)-phospho-L-arginine + ADP + H(+). Catalyzes the reversible transfer of the terminal phosphoryl group of ATP to L-arginine. The polypeptide is Arginine kinase (Limulus polyphemus (Atlantic horseshoe crab)).